We begin with the raw amino-acid sequence, 324 residues long: Biotin synthase 1 (324 aa).

In terms of domain architecture, Radical SAM core spans 37-256 (NAIETASLLS…VALARILMPA (220 aa)). Positions 52, 56, and 59 each coordinate [4Fe-4S] cluster. Residues cysteine 96, cysteine 127, cysteine 187, and arginine 260 each coordinate [2Fe-2S] cluster.

This sequence belongs to the radical SAM superfamily. Biotin synthase family. Homodimer. It depends on [4Fe-4S] cluster as a cofactor. [2Fe-2S] cluster serves as cofactor.

The enzyme catalyses (4R,5S)-dethiobiotin + (sulfur carrier)-SH + 2 reduced [2Fe-2S]-[ferredoxin] + 2 S-adenosyl-L-methionine = (sulfur carrier)-H + biotin + 2 5'-deoxyadenosine + 2 L-methionine + 2 oxidized [2Fe-2S]-[ferredoxin]. Its pathway is cofactor biosynthesis; biotin biosynthesis; biotin from 7,8-diaminononanoate: step 2/2. In terms of biological role, catalyzes the conversion of dethiobiotin (DTB) to biotin by the insertion of a sulfur atom into dethiobiotin via a radical-based mechanism. This chain is Biotin synthase 1, found in Paracoccus denitrificans (strain Pd 1222).